A 562-amino-acid chain; its full sequence is MDDNKRPLYLPFAGPAILEAPLINKGSAFSEEERIFFNLEGLVPYAIETIEEQASRAYDQFRSFNNDLDKHIYLRNIQDTNETLFYRLVQNHISEMMPIIYTPTVGLACERFSKNYRRNRGLFISYPNKDRIDDILNNSTRQKVKIIVVTDGERILGLGDQGIGGMGIPIGKLSLYTSCGGISPAYTLPITLDVGTDNPQLLEDPMYMGWRHPRIGGEEYAEFIEAFMQAVHVRWPDTLIQFEDFAQKNAMPILERYKERYCCFNDDIQGTAAVTVGSLLAACKAAGTELNKQRVAFLGAGSAGCGIAEAIVAQMVSEGISDEQARSQVCMVDRWGLLLDNMPNLLPFQQKLAQKCADISHWNNFSDNISLLDVVNNVKPTVLIGVSGAPGLFTEEIVRAMHSHCERPIIFPLSNPTSRVEATPKDILHWTSGQALVATGSPFEPVVVDGETYEIAQCNNSFIFPGIGLGVLASGARHVSDAMLMASSRALAECSPLAINGSGPLLPKLEDIHSVSKHIAFAVGKVAIEQGLSLPASDELLMQSIEDNFWKPEYRRYKRTSF.

Y101 serves as the catalytic Proton donor. R154 serves as a coordination point for NAD(+). K172 serves as the catalytic Proton acceptor. E243, D244, and D267 together coordinate a divalent metal cation. Residues D267 and N415 each coordinate NAD(+).

It belongs to the malic enzymes family. As to quaternary structure, homotetramer. Mg(2+) is required as a cofactor. Requires Mn(2+) as cofactor.

The enzyme catalyses (S)-malate + NAD(+) = pyruvate + CO2 + NADH. It carries out the reaction oxaloacetate + H(+) = pyruvate + CO2. The polypeptide is NAD-dependent malic enzyme (Shewanella sp. (strain MR-4)).